The primary structure comprises 221 residues: Oxaloacetate tautomerase oaa1, mitochondrial (221 aa).

Residues E59, E61, and D93 each contribute to the Mg(2+) site.

It belongs to the FAH family. Requires Mg(2+) as cofactor. It depends on Mn(2+) as a cofactor.

The protein localises to the mitochondrion. The protein resides in the cytoplasm. The enzyme catalyses oxaloacetate = enol-oxaloacetate. In terms of biological role, tautomerase that converts enol-oxaloacetate, a strong inhibitor of succinate dehydrogenase, to the physiological keto form of oxaloacetate. The sequence is that of Oxaloacetate tautomerase oaa1, mitochondrial from Schizosaccharomyces pombe (strain 972 / ATCC 24843) (Fission yeast).